The primary structure comprises 619 residues: Coagulation factor X-activating enzyme heavy chain (619 aa).

Residues 1–20 (MMQVLLVTISLAVFPYQGSS) form the signal peptide. The propeptide occupies 21–188 (IILESGNVND…SDKPIKKASQ (168 aa)). Residues 199-393 (IFIELVIIVD…YKPKCIFNPP (195 aa)) enclose the Peptidase M12B domain. A disulfide bridge links Cys-215 with Cys-251. Asn-216 and Asn-257 each carry an N-linked (GlcNAc...) (complex) asparagine glycan. Disulfide bonds link Cys-308/Cys-388, Cys-348/Cys-372, and Cys-350/Cys-355. Residue His-333 participates in Zn(2+) binding. Glu-334 is an active-site residue. His-337 and His-343 together coordinate Zn(2+). Asn-351 and Asn-371 each carry an N-linked (GlcNAc...) (complex) asparagine glycan. One can recognise a Disintegrin domain in the interval 401–487 (PPVCGNEIWE…ECPRDQLQQN (87 aa)). Residues Val-403, Asn-406, Ile-408, Glu-410, Glu-413, and Asp-416 each contribute to the Ca(2+) site. 14 disulfide bridges follow: Cys-404-Cys-433, Cys-415-Cys-428, Cys-417-Cys-423, Cys-427-Cys-450, Cys-441-Cys-447, Cys-446-Cys-472, Cys-459-Cys-479, Cys-466-Cys-498, Cys-491-Cys-503, Cys-510-Cys-560, Cys-525-Cys-571, Cys-538-Cys-548, Cys-555-Cys-597, and Cys-591-Cys-603. Positions 465–467 (ECD) match the D/ECD-tripeptide motif. Ca(2+) is bound by residues Asp-467, Val-468, Glu-470, Asp-482, and Gln-483.

Belongs to the venom metalloproteinase (M12B) family. P-III subfamily. P-IIId sub-subfamily. As to quaternary structure, heterotrimer; disulfide-linked. The heterotrimer consists of 1 heavy chain and 2 light chains (lectins): LC1 and LC2. It depends on Zn(2+) as a cofactor. N-glycosylated; probably required for conformation. Removal of easily accessible sugars does not change its functional capacity, but removal of the core sugars with N-glycanase causes a virtually complete loss of enzyme activity, apparently as a result of major conformational changes in the molecule. Not O-glycosylated. Expressed by the venom gland.

It is found in the secreted. The enzyme catalyses Specifically activates several components of the blood clotting system, including coagulation factor X, coagulation factor IX and protein C by cleavage of Arg-|-Xaa bonds. Has no action on insulin B chain.. Functionally, catalytic subunit of blood coagulation factor X-activating enzyme. Activates coagulation factor X (F10) by cleaving the Arg-Ile bond and is also able to activate coagulation factor IX (F9) and protein S (PROS1) by specific cleavage of Arg-Ile and Arg-Val bonds. The sequence is that of Coagulation factor X-activating enzyme heavy chain from Daboia siamensis (Eastern Russel's viper).